The chain runs to 374 residues: Heme A synthase (374 aa).

The tract at residues methionine 1–histidine 22 is disordered. The next 5 helical transmembrane spans lie at isoleucine 32–glycine 52, arginine 118–threonine 138, leucine 149–serine 169, valine 184–valine 204, and leucine 226–leucine 246. Histidine 281 provides a ligand contact to heme. The next 3 membrane-spanning stretches (helical) occupy residues leucine 283 to phenylalanine 300, alanine 309 to leucine 329, and valine 332 to isoleucine 352. Residue histidine 340 participates in heme binding.

This sequence belongs to the COX15/CtaA family. Type 2 subfamily. As to quaternary structure, interacts with CtaB. The cofactor is heme b.

It is found in the cell membrane. It catalyses the reaction Fe(II)-heme o + 2 A + H2O = Fe(II)-heme a + 2 AH2. It functions in the pathway porphyrin-containing compound metabolism; heme A biosynthesis; heme A from heme O: step 1/1. Functionally, catalyzes the conversion of heme O to heme A by two successive hydroxylations of the methyl group at C8. The first hydroxylation forms heme I, the second hydroxylation results in an unstable dihydroxymethyl group, which spontaneously dehydrates, resulting in the formyl group of heme A. The protein is Heme A synthase of Granulibacter bethesdensis (strain ATCC BAA-1260 / CGDNIH1).